We begin with the raw amino-acid sequence, 775 residues long: MDEDGNLQISNSNYNGEEEGEDPENNTLNQPLLKRHRTLSSTPLALVGAKVSHIESLDYEINENDLFKHDWRSRSKAQVFQYIFLKWTLACLVGLFTGLIATLINLAVENIAGYKLLAVGYYIAQDRFWTGLMVFTGANLGLTLVATVLVVYFAPTAAGPGIPEIKAYLNGIDTPNMFGFTTMMVKIVGSIGAVAAGLDLGKEGPLVHIGSCIASLLGQGGPDNHRIKWRWLRYFNNDRDRRDLITCGSASGVCAAFRSPVGGVLFALEEVATWWRSALLWRTFFSTAVVVVVLRAFIEICNSGKCGLFGSGGLIMFDVSHVEVRYHAADIIPVTLIGVFGGILGSLYNHLLHKVLRLYNLINQKGKIHKVLLSLGVSLFTSVCLFGLPFLAECKPCDPSIDEICPTNGRSGNFKQFNCPNGYYNDLSTLLLTTNDDAVRNIFSSNTPNEFGMVSLWIFFGLYCILGLITFGIATPSGLFLPIILMGSAYGRMLGTAMGSYTNIDQGLYAVLGAASLMAGSMRMTVSLCVIFLELTNNLLLLPITMFVLLIAKTVGDSFNLSIYEIILHLKGLPFLEANPEPWMRNLTVGELNDAKPPVVTLNGVEKVANIVDVLRNTTHNAFPVLDGADQNTGTELHGLILRAHLVKVLKKRWFLNEKRRTEEWEVREKFTPVELAEREDNFDDVAITSSEMQLYVDLHPLTNTTPYTVVQSMSVAKALVLFRSVGLRHLLVVPKIQASGMSPVIGILTRQDLRAYNILQAFPHLDKHKSGKAR.

Residues 1–28 (MDEDGNLQISNSNYNGEEEGEDPENNTL) form a disordered region. 12 helical membrane passes run 88–108 (TLAC…NLAV), 131–151 (GLMV…VLVV), 178–198 (FGFT…AAGL), 206–226 (LVHI…DNHR), 248–268 (GSAS…LFAL), 278–298 (ALLW…RAFI), 328–348 (AADI…GSLY), 371–391 (VLLS…LPFL), 453–473 (MVSL…TFGI), 478–498 (GLFL…GTAM), 510–530 (AVLG…SLCV), and 531–551 (IFLE…VLLI). CBS domains lie at 595 to 658 (AKPP…FLNE) and 703 to 768 (TNTT…HLDK). The helical transmembrane segment at 730 to 750 (HLLVVPKIQASGMSPVIGILT) threads the bilayer.

This sequence belongs to the chloride channel (TC 2.A.49) family. In terms of assembly, homodimer. Interacts with PP2A5. Broadly expressed in the plant.

The protein resides in the membrane. Functionally, voltage-gated chloride channel that could play a role in the regulation of nitrate content. This chain is Chloride channel protein CLC-a (CLC-A), found in Arabidopsis thaliana (Mouse-ear cress).